Consider the following 207-residue polypeptide: Large ribosomal subunit protein uL4 (207 aa).

The disordered stretch occupies residues 55–76 (ALVSGGGKKPWRQKGTGRARHG). Positions 63 to 76 (KPWRQKGTGRARHG) are enriched in basic residues.

Belongs to the universal ribosomal protein uL4 family. Part of the 50S ribosomal subunit.

In terms of biological role, one of the primary rRNA binding proteins, this protein initially binds near the 5'-end of the 23S rRNA. It is important during the early stages of 50S assembly. It makes multiple contacts with different domains of the 23S rRNA in the assembled 50S subunit and ribosome. Functionally, forms part of the polypeptide exit tunnel. This Phytoplasma mali (strain AT) protein is Large ribosomal subunit protein uL4.